Here is a 202-residue protein sequence, read N- to C-terminus: UPF0056 membrane protein PH0214 (202 aa).

6 helical membrane passes run 5-25 (ILSS…ILLV), 47-67 (IGFI…QDIF), 76-96 (VAGG…GGMV), 104-124 (ILAL…AAIT), 135-155 (IIVS…LMMI), and 174-194 (IIGL…AGGI).

This sequence belongs to the UPF0056 (MarC) family.

The protein resides in the cell membrane. This is UPF0056 membrane protein PH0214 from Pyrococcus horikoshii (strain ATCC 700860 / DSM 12428 / JCM 9974 / NBRC 100139 / OT-3).